Here is a 178-residue protein sequence, read N- to C-terminus: Large ribosomal subunit protein uL6 (178 aa).

The protein belongs to the universal ribosomal protein uL6 family. As to quaternary structure, part of the 50S ribosomal subunit.

This protein binds to the 23S rRNA, and is important in its secondary structure. It is located near the subunit interface in the base of the L7/L12 stalk, and near the tRNA binding site of the peptidyltransferase center. The polypeptide is Large ribosomal subunit protein uL6 (Corynebacterium urealyticum (strain ATCC 43042 / DSM 7109)).